The chain runs to 754 residues: 5-methyltetrahydropteroyltriglutamate--homocysteine methyltransferase (754 aa).

5-methyltetrahydropteroyltri-L-glutamate contacts are provided by residues 16 to 19 (RELK) and Lys-114. L-homocysteine is bound by residues 430–432 (IGS) and Glu-483. Residues 430 to 432 (IGS) and Glu-483 contribute to the L-methionine site. Residues 514–515 (RC) and Trp-560 contribute to the 5-methyltetrahydropteroyltri-L-glutamate site. Residue Asp-598 participates in L-homocysteine binding. An L-methionine-binding site is contributed by Asp-598. 5-methyltetrahydropteroyltri-L-glutamate is bound at residue Glu-604. The Zn(2+) site is built by His-640, Cys-642, and Glu-664. The active-site Proton donor is His-693. Cys-725 is a binding site for Zn(2+).

This sequence belongs to the vitamin-B12 independent methionine synthase family. The cofactor is Zn(2+).

The enzyme catalyses 5-methyltetrahydropteroyltri-L-glutamate + L-homocysteine = tetrahydropteroyltri-L-glutamate + L-methionine. The protein operates within amino-acid biosynthesis; L-methionine biosynthesis via de novo pathway; L-methionine from L-homocysteine (MetE route): step 1/1. Functionally, catalyzes the transfer of a methyl group from 5-methyltetrahydrofolate to homocysteine resulting in methionine formation. This chain is 5-methyltetrahydropteroyltriglutamate--homocysteine methyltransferase, found in Aeromonas salmonicida (strain A449).